Reading from the N-terminus, the 215-residue chain is 3-isopropylmalate dehydratase small subunit (215 aa).

Belongs to the LeuD family. LeuD type 1 subfamily. In terms of assembly, heterodimer of LeuC and LeuD.

It carries out the reaction (2R,3S)-3-isopropylmalate = (2S)-2-isopropylmalate. It functions in the pathway amino-acid biosynthesis; L-leucine biosynthesis; L-leucine from 3-methyl-2-oxobutanoate: step 2/4. Catalyzes the isomerization between 2-isopropylmalate and 3-isopropylmalate, via the formation of 2-isopropylmaleate. In Polynucleobacter asymbioticus (strain DSM 18221 / CIP 109841 / QLW-P1DMWA-1) (Polynucleobacter necessarius subsp. asymbioticus), this protein is 3-isopropylmalate dehydratase small subunit.